Here is a 152-residue protein sequence, read N- to C-terminus: Sulfur-rich protein (152 aa).

Residues 1–20 (MSTVPVVQGAGSSNSAQDIS) form a disordered region. A run of 2 helical transmembrane segments spans residues 43-63 (VGLVVIGLLLVIATLIFLVSA) and 69-89 (AIYLVAIPAILGCVNICVGIL).

The protein resides in the membrane. The chain is Sulfur-rich protein (srp) from Chlamydia trachomatis serovar A (strain ATCC VR-571B / DSM 19440 / HAR-13).